A 593-amino-acid chain; its full sequence is NADH-quinone oxidoreductase subunit C/D (593 aa).

The interval 1 to 184 is NADH dehydrogenase I subunit C; that stretch reads MTADNALYIP…DPYSLTLAKQ (184 aa). Residues 208 to 593 form an NADH dehydrogenase I subunit D region; sequence DYMFLNLGPN…IDFVMADVDR (386 aa).

The protein in the N-terminal section; belongs to the complex I 30 kDa subunit family. In the C-terminal section; belongs to the complex I 49 kDa subunit family. As to quaternary structure, NDH-1 is composed of 13 different subunits. Subunits NuoB, CD, E, F, and G constitute the peripheral sector of the complex.

The protein localises to the cell inner membrane. The catalysed reaction is a quinone + NADH + 5 H(+)(in) = a quinol + NAD(+) + 4 H(+)(out). In terms of biological role, NDH-1 shuttles electrons from NADH, via FMN and iron-sulfur (Fe-S) centers, to quinones in the respiratory chain. The immediate electron acceptor for the enzyme in this species is believed to be ubiquinone. Couples the redox reaction to proton translocation (for every two electrons transferred, four hydrogen ions are translocated across the cytoplasmic membrane), and thus conserves the redox energy in a proton gradient. In Pseudomonas syringae pv. syringae (strain B728a), this protein is NADH-quinone oxidoreductase subunit C/D.